The primary structure comprises 488 residues: Bifunctional pantoate ligase/cytidylate kinase (488 aa).

1–8 (MGALHRAH) serves as a coordination point for ATP. Positions 1 to 251 (MGALHRAHGQ…CGETRLIDHT (251 aa)) are pantoate--beta-alanine ligase. H8 (proton donor) is an active-site residue. Q36 serves as a coordination point for (R)-pantoate. Beta-alanine is bound at residue Q36. 125–128 (GEKD) is an ATP binding site. Position 131 (Q131) interacts with (R)-pantoate. ATP contacts are provided by residues V154 and 162–165 (CSSR). Residues 252 to 488 (FLMSRQPIVA…PEEVWPTPGS (237 aa)) are cytidylate kinase.

In the N-terminal section; belongs to the pantothenate synthetase family. The protein in the C-terminal section; belongs to the cytidylate kinase family. Type 1 subfamily.

The protein resides in the cytoplasm. The enzyme catalyses (R)-pantoate + beta-alanine + ATP = (R)-pantothenate + AMP + diphosphate + H(+). The catalysed reaction is CMP + ATP = CDP + ADP. It catalyses the reaction dCMP + ATP = dCDP + ADP. It functions in the pathway cofactor biosynthesis; (R)-pantothenate biosynthesis; (R)-pantothenate from (R)-pantoate and beta-alanine: step 1/1. Functionally, catalyzes the condensation of pantoate with beta-alanine in an ATP-dependent reaction via a pantoyl-adenylate intermediate. In terms of biological role, catalyzes the transfer of a phosphate group from ATP to either CMP or dCMP to form CDP or dCDP and ADP, respectively. The chain is Bifunctional pantoate ligase/cytidylate kinase from Prochlorococcus marinus (strain MIT 9303).